Here is a 483-residue protein sequence, read N- to C-terminus: ATP-dependent RNA helicase DDX25 (483 aa).

Phosphothreonine is present on Thr49. The Nuclear export signal signature appears at 61-74 (LAANSLLNKLIRQS). Positions 97–125 (KTFEELRLKEELLKGIYAMGFNRPSKIQE) match the Q motif motif. A Nuclear localization signal motif is present at residues 100–114 (EELRLKEELLKGIYA). In terms of domain architecture, Helicase ATP-binding spans 130-300 (MMLAHPPQNL…ERIIPDPNVI (171 aa)). Residue 143 to 150 (SQSGTGKT) coordinates ATP. The short motif at 247 to 250 (DEAD) is the DEAD box element. Residues 311-478 (NIRQYYVLCE…QLDPEDMDEI (168 aa)) enclose the Helicase C-terminal domain.

Belongs to the DEAD box helicase family. Post-translationally, phosphorylated on threonine residues. The phosphorylated form is found in the cytoplasm but not in the nucleus. Isoform 1 is expressed in germ cells. Isoform 2 is highly expressed in Leydig cells and weakly expressed in the pituitary and hypothalamus. Isoform 3 is weakly expressed only in germ cells.

The protein resides in the cytoplasm. Its subcellular location is the nucleus. It catalyses the reaction ATP + H2O = ADP + phosphate + H(+). ATP-dependent RNA helicase. Required for mRNA export and translation regulation during spermatid development. In Rattus norvegicus (Rat), this protein is ATP-dependent RNA helicase DDX25 (Ddx25).